Here is a 563-residue protein sequence, read N- to C-terminus: Arginine--tRNA ligase (563 aa).

The 'HIGH' region signature appears at 120-130 (PNIAKPFHVGH).

This sequence belongs to the class-I aminoacyl-tRNA synthetase family. In terms of assembly, monomer.

The protein localises to the cytoplasm. It catalyses the reaction tRNA(Arg) + L-arginine + ATP = L-arginyl-tRNA(Arg) + AMP + diphosphate. The sequence is that of Arginine--tRNA ligase from Clostridium beijerinckii (strain ATCC 51743 / NCIMB 8052) (Clostridium acetobutylicum).